Reading from the N-terminus, the 600-residue chain is MIEVLLVTICLAVFPYQGSSIILESGNVNDYEVVYPRKVTAVPKGAVQQKYEDAMQYEFKVNGEPVVLHLEKNKELFSEDYSETHYSPDGREITTYPSVEDHCYYHGRIQNEADSTASISACNGLKGHFKLQGETYLIEPLKLPDSEAHAVFKYENVEKEEEAPKMCGVTETNWKSDEPIKKASQLVVTAEQQRFPRRYVKLAIVADHRMYTKHKKNLKPWVFQMVNSVHQIYRSMNVLIALVYLNIWKKNDKITAQSASNVTLDLFGNWRETVLLKRKRHDCAQLLTAIDFDGPTIGRAHVSSVCDPKRSTGIVQNYTEINLVNAVIMAHELGHNLGMDHDGNQCNCHACIMSAVINNPPSERFSGCSMGYYQTFLTAYNPQCILNALSKRDIITPPVCGNELLEEGEECDCGSPENCQYQCCNATTCKLHSWVECESGECCEQCRFKKAGAVCRAARTECDIPENCTDQSADCPTDSFHRNGQPCLYNHGYCYNGNCPVMHYQCYGLFGPNATVGQDGCFDANDRGDEYFYCRKENEKYIPCAQEDVKCGRLFCTYIYDINLCRYDYSANGMVAQGTKCADGKVCNSNRQCADVNTAY.

Positions 1–20 are cleaved as a signal peptide; sequence MIEVLLVTICLAVFPYQGSS. Residues 21-191 constitute a propeptide that is removed on maturation; it reads IILESGNVND…KASQLVVTAE (171 aa). Gln192 bears the Pyrrolidone carboxylic acid mark. The region spanning 198 to 389 is the Peptidase M12B domain; the sequence is RYVKLAIVAD…YNPQCILNAL (192 aa). N-linked (GlcNAc...) asparagine glycans are attached at residues Asn261 and Asn317. Intrachain disulfides connect Cys306-Cys384, Cys346-Cys368, and Cys348-Cys351. Residue His331 coordinates Zn(2+). Glu332 is an active-site residue. Residues His335 and His341 each contribute to the Zn(2+) site. One can recognise a Disintegrin domain in the interval 397–483; sequence PPVCGNELLE…DCPTDSFHRN (87 aa). Residues Val399, Asn402, Leu404, Glu406, Glu409, and Asp412 each contribute to the Ca(2+) site. Disulfide bonds link Cys400-Cys429, Cys411-Cys424, Cys413-Cys419, Cys423-Cys446, Cys437-Cys443, Cys442-Cys468, Cys455-Cys475, Cys462-Cys494, Cys487-Cys499, Cys506-Cys556, Cys521-Cys565, Cys534-Cys544, Cys551-Cys587, and Cys581-Cys593. N-linked (GlcNAc...) asparagine glycosylation is present at Asn425. The D/ECD-tripeptide signature appears at 461 to 463; it reads ECD. N-linked (GlcNAc...) asparagine glycosylation occurs at Asn467. Residue Asn513 is glycosylated (N-linked (GlcNAc...) asparagine).

Belongs to the venom metalloproteinase (M12B) family. P-III subfamily. P-IIIa sub-subfamily. As to quaternary structure, monomer. Zn(2+) is required as a cofactor. In terms of tissue distribution, expressed by the venom gland.

Its subcellular location is the secreted. This metalloproteinase-disintegrin-like impairs hemostasis in the envenomed animal. This is Zinc metalloproteinase-disintegrin-like stejnihagin-B from Trimeresurus stejnegeri (Chinese green tree viper).